Consider the following 220-residue polypeptide: Deoxyribose-phosphate aldolase (220 aa).

Asp-89 functions as the Proton donor/acceptor in the catalytic mechanism. Catalysis depends on Lys-151, which acts as the Schiff-base intermediate with acetaldehyde. Residue Lys-180 is the Proton donor/acceptor of the active site.

This sequence belongs to the DeoC/FbaB aldolase family. DeoC type 1 subfamily.

The protein localises to the cytoplasm. The enzyme catalyses 2-deoxy-D-ribose 5-phosphate = D-glyceraldehyde 3-phosphate + acetaldehyde. The protein operates within carbohydrate degradation; 2-deoxy-D-ribose 1-phosphate degradation; D-glyceraldehyde 3-phosphate and acetaldehyde from 2-deoxy-alpha-D-ribose 1-phosphate: step 2/2. Functionally, catalyzes a reversible aldol reaction between acetaldehyde and D-glyceraldehyde 3-phosphate to generate 2-deoxy-D-ribose 5-phosphate. This is Deoxyribose-phosphate aldolase from Deinococcus radiodurans (strain ATCC 13939 / DSM 20539 / JCM 16871 / CCUG 27074 / LMG 4051 / NBRC 15346 / NCIMB 9279 / VKM B-1422 / R1).